Consider the following 22-residue polypeptide: Oxygen-evolving enhancer protein 2 (22 aa).

The protein belongs to the PsbP family.

The protein localises to the plastid. It is found in the chloroplast thylakoid membrane. May be involved in the regulation of photosystem II. The chain is Oxygen-evolving enhancer protein 2 from Physcomitrium patens (Spreading-leaved earth moss).